Here is a 346-residue protein sequence, read N- to C-terminus: Elongation factor Ts (346 aa).

Residues 80–83 are involved in Mg(2+) ion dislocation from EF-Tu; it reads TDFV.

This sequence belongs to the EF-Ts family.

The protein localises to the cytoplasm. Functionally, associates with the EF-Tu.GDP complex and induces the exchange of GDP to GTP. It remains bound to the aminoacyl-tRNA.EF-Tu.GTP complex up to the GTP hydrolysis stage on the ribosome. The polypeptide is Elongation factor Ts (Streptococcus thermophilus (strain CNRZ 1066)).